The chain runs to 397 residues: Mycinamicin IV hydroxylase/epoxidase (397 aa).

Residues 63-86 (RGPSMTRDEPRTRPEMVKGGLLSM) form a disordered region. Basic and acidic residues predominate over residues 68–78 (TRDEPRTRPEM). A substrate-binding site is contributed by G81. Heme is bound by residues H91, R95, R288, H344, and C346.

This sequence belongs to the cytochrome P450 family. Heme serves as cofactor.

It participates in antibiotic biosynthesis; mycinamicin biosynthesis. Involved in the biosynthesis of mycinamicin, a 16-membered macrolide antibiotic. Catalyzes consecutive hydroxylation (at C14) and epoxidation (at C12-C13) reactions with mycinamicin IV as initial substrate, leading to mycinamicin II. These reactions require prior dimethylation of 6-deoxyallose to mycinose for effective conversion by the dual function MycG enzyme. This Micromonospora griseorubida protein is Mycinamicin IV hydroxylase/epoxidase.